A 328-amino-acid polypeptide reads, in one-letter code: Malate dehydrogenase (328 aa).

11-17 is an NAD(+) binding site; the sequence is GAAGQIG. R94 and R100 together coordinate substrate. NAD(+) contacts are provided by residues N107, Q114, and 131–133; that span reads VGN. N133 and R164 together coordinate substrate. The active-site Proton acceptor is H189.

This sequence belongs to the LDH/MDH superfamily. MDH type 2 family.

It carries out the reaction (S)-malate + NAD(+) = oxaloacetate + NADH + H(+). Its function is as follows. Catalyzes the reversible oxidation of malate to oxaloacetate. This chain is Malate dehydrogenase, found in Xanthomonas euvesicatoria pv. vesicatoria (strain 85-10) (Xanthomonas campestris pv. vesicatoria).